The primary structure comprises 163 residues: MDWILPIAGIIAAIAFLILCIGIVAVLNSVKKNLDYVAKTLDGVEGQVQGITRETTDLLHKVNRLTEDIQGKVDRLNSVVDAVKGIGDSVQTLNSSVDRVTNSITHNISQNEDKISQVVQWSNVAMEIADKWQNRHYRRGSANYKANNVATDANHSYTSRVDK.

A helical transmembrane segment spans residues 7 to 27; it reads IAGIIAAIAFLILCIGIVAVL.

Belongs to the UPF0478 family.

It localises to the cell membrane. This Staphylococcus aureus (strain bovine RF122 / ET3-1) protein is UPF0478 protein SAB1599c.